The chain runs to 240 residues: Anti-H(O) lectin (240 aa).

N-linked (GlcNAc...) asparagine glycosylation is present at N4. Mn(2+) contacts are provided by E124 and D126. Ca(2+) contacts are provided by D126, Y128, N130, and D133. D133 and H141 together coordinate Mn(2+).

It belongs to the leguminous lectin family.

In terms of biological role, L-fucose specific lectin. The polypeptide is Anti-H(O) lectin (Lotus tetragonolobus (Winged pea)).